Here is a 125-residue protein sequence, read N- to C-terminus: Fumarate reductase subunit D (125 aa).

3 consecutive transmembrane segments (helical) span residues 30–50 (FAMI…MGVI), 60–80 (VVSF…LALP), and 105–125 (IACY…IFML).

This sequence belongs to the FrdD family. As to quaternary structure, part of an enzyme complex containing four subunits: a flavoprotein (FrdA), an iron-sulfur protein (FrdB), and two hydrophobic anchor proteins (FrdC and FrdD).

It localises to the cell inner membrane. Its function is as follows. Anchors the catalytic components of the fumarate reductase complex to the cell membrane, binds quinones. The chain is Fumarate reductase subunit D from Vibrio vulnificus (strain YJ016).